The following is a 414-amino-acid chain: Probable isoprenylcysteine alpha-carbonyl methylesterase ICME (414 aa).

A disordered region spans residues 1-54 (MQPASPVSGDAGPVAEAVPPRGAPQVLVRRRSVPFSPDSPLAPGSRGGGERRST). 2 helical membrane-spanning segments follow: residues 90–110 (LAAL…VGYY) and 145–165 (VVAF…GALL). Residues 151–153 (GGA) and 222–224 (QSA) each bind substrate. Catalysis depends on residues S223, D323, and H355.

This sequence belongs to the AB hydrolase superfamily. Isoprenylcysteine methylesterase family.

It localises to the endoplasmic reticulum membrane. It is found in the golgi apparatus membrane. The enzyme catalyses [protein]-C-terminal S-[(2E,6E)-farnesyl]-L-cysteine methyl ester + H2O = [protein]-C-terminal S-[(2E,6E)-farnesyl]-L-cysteine + methanol + H(+). Functionally, catalyzes the demethylation of isoprenylcysteine methylesters. The chain is Probable isoprenylcysteine alpha-carbonyl methylesterase ICME (IMCE) from Oryza sativa subsp. japonica (Rice).